We begin with the raw amino-acid sequence, 317 residues long: Aspartate carbamoyltransferase catalytic subunit (317 aa).

Residues arginine 66 and threonine 67 each coordinate carbamoyl phosphate. Residue lysine 94 coordinates L-aspartate. Residues arginine 116, histidine 144, and glutamine 147 each coordinate carbamoyl phosphate. Positions 177 and 231 each coordinate L-aspartate. Residues glycine 272 and proline 273 each coordinate carbamoyl phosphate.

This sequence belongs to the aspartate/ornithine carbamoyltransferase superfamily. ATCase family. Heterododecamer (2C3:3R2) of six catalytic PyrB chains organized as two trimers (C3), and six regulatory PyrI chains organized as three dimers (R2).

It carries out the reaction carbamoyl phosphate + L-aspartate = N-carbamoyl-L-aspartate + phosphate + H(+). It functions in the pathway pyrimidine metabolism; UMP biosynthesis via de novo pathway; (S)-dihydroorotate from bicarbonate: step 2/3. In terms of biological role, catalyzes the condensation of carbamoyl phosphate and aspartate to form carbamoyl aspartate and inorganic phosphate, the committed step in the de novo pyrimidine nucleotide biosynthesis pathway. In Rhodopseudomonas palustris (strain BisB18), this protein is Aspartate carbamoyltransferase catalytic subunit.